Consider the following 561-residue polypeptide: 3-hydroxy-3-methylglutaryl-coenzyme A reductase 3 (561 aa).

The next 2 membrane-spanning stretches (helical) occupy residues 25 to 45 (PIRHTNLIFSALFAASLAYLM) and 69 to 89 (IFGLVASLIYLLSFFGIAFVQ). Residues 90-145 (SIVSSSDDEEEDFLVGPARGSSAAAAVAPPPPPSSPAQCSLLGSPHDDAARERMPE) are linker. A disordered region spans residues 113-146 (AAAVAPPPPPSSPAQCSLLGSPHDDAARERMPEE). A compositionally biased stretch (basic and acidic residues) spans 134-143 (PHDDAARERM). The tract at residues 146 to 561 (EDEEIVSSVV…SSKDMSKVIS (416 aa)) is catalytic. Glutamate 240 functions as the Charge relay system in the catalytic mechanism. Asparagine 304 is a glycosylation site (N-linked (GlcNAc...) asparagine). Residues lysine 372 and aspartate 448 each act as charge relay system in the active site. Histidine 546 functions as the Proton donor in the catalytic mechanism. Asparagine 550 is a glycosylation site (N-linked (GlcNAc...) asparagine).

It belongs to the HMG-CoA reductase family.

The protein localises to the endoplasmic reticulum membrane. It catalyses the reaction (R)-mevalonate + 2 NADP(+) + CoA = (3S)-3-hydroxy-3-methylglutaryl-CoA + 2 NADPH + 2 H(+). The protein operates within metabolic intermediate biosynthesis; (R)-mevalonate biosynthesis; (R)-mevalonate from acetyl-CoA: step 3/3. Its function is as follows. Catalyzes the synthesis of mevalonate. The specific precursor of all isoprenoid compounds present in plants. The chain is 3-hydroxy-3-methylglutaryl-coenzyme A reductase 3 (HMG3) from Oryza sativa subsp. japonica (Rice).